Reading from the N-terminus, the 348-residue chain is Protein arginine N-methyltransferase 1 (348 aa).

One can recognise an SAM-dependent MTase PRMT-type domain in the interval 24-342; the sequence is KDYYFDSYAH…KGEVCDLNEQ (319 aa). S-adenosyl-L-methionine contacts are provided by H37, R46, G70, E92, and E121. Active-site residues include E139 and E148.

The protein belongs to the class I-like SAM-binding methyltransferase superfamily. Protein arginine N-methyltransferase family. As to quaternary structure, interacts with daf-16. Interacts with pgl-1 and pgl-3. Interacts with alg-1. Widely expressed in pharyngeal, body wall muscle, intestinal and vulval cells.

Its subcellular location is the cytoplasm. The protein localises to the nucleus. The enzyme catalyses L-arginyl-[protein] + 2 S-adenosyl-L-methionine = N(omega),N(omega)-dimethyl-L-arginyl-[protein] + 2 S-adenosyl-L-homocysteine + 2 H(+). It carries out the reaction L-arginyl-[protein] + S-adenosyl-L-methionine = N(omega)-methyl-L-arginyl-[protein] + S-adenosyl-L-homocysteine + H(+). In terms of biological role, arginine methyltransferase that methylates (mono and asymmetric dimethylation) the guanidino nitrogens of arginyl residues present in target proteins. Catalyzes the formation of monomethylarginine and asymmetric dimethylarginine on histones H2A and H4, a specific tag for epigenetic transcriptional activation. Catalyzes asymmetric arginine dimethylation of mitochondrial proteins necessary for mitochondrial oxidative phosphorylation activity and thus aerobic respiration and ATP synthesis, and the mitochondrial stress response. Methylates arginine residues in P-granule components pgl-1 and pgl-3 to promote P-granule degradation by autophagy in somatic cells to ensure exclusive localization of the P-granules in germ cells. Modulates the interaction of P-granule proteins epg-2 and sepa-1. Methylates arginine residues in daf-16, which blocks ftt-2 binding to daf-16, prevents akt-mediated phosphorylation and allows for daf-16 to translocate to the nucleus. In turn, association with daf-16 therefore allows for the transcriptional activation of daf-16 and regulation of longevity-related genes. Maintains lifespan by modulating daf-16 activity downstream of the daf-2 signaling pathway. Plays a role in heat and oxidative stress resistance. Role in stress resistance and also fat storage may be in association with the daf-2 signaling pathway. Required for normal feeding behavior. This Caenorhabditis elegans protein is Protein arginine N-methyltransferase 1.